We begin with the raw amino-acid sequence, 367 residues long: Peptide chain release factor 2 (367 aa).

Position 254 is an N5-methylglutamine (Q254).

It belongs to the prokaryotic/mitochondrial release factor family. Methylated by PrmC. Methylation increases the termination efficiency of RF2.

Its subcellular location is the cytoplasm. In terms of biological role, peptide chain release factor 2 directs the termination of translation in response to the peptide chain termination codons UGA and UAA. This chain is Peptide chain release factor 2, found in Bordetella avium (strain 197N).